Consider the following 248-residue polypeptide: PF03932 family protein CutC (248 aa).

It belongs to the CutC family.

Its subcellular location is the cytoplasm. This chain is PF03932 family protein CutC, found in Citrobacter koseri (strain ATCC BAA-895 / CDC 4225-83 / SGSC4696).